A 363-amino-acid chain; its full sequence is Aminomethyltransferase (363 aa).

It belongs to the GcvT family. In terms of assembly, the glycine cleavage system is composed of four proteins: P, T, L and H.

The catalysed reaction is N(6)-[(R)-S(8)-aminomethyldihydrolipoyl]-L-lysyl-[protein] + (6S)-5,6,7,8-tetrahydrofolate = N(6)-[(R)-dihydrolipoyl]-L-lysyl-[protein] + (6R)-5,10-methylene-5,6,7,8-tetrahydrofolate + NH4(+). In terms of biological role, the glycine cleavage system catalyzes the degradation of glycine. In Nitrosomonas europaea (strain ATCC 19718 / CIP 103999 / KCTC 2705 / NBRC 14298), this protein is Aminomethyltransferase.